We begin with the raw amino-acid sequence, 755 residues long: Actin-related protein 5 (755 aa).

A Phosphoserine modification is found at S7. K12 is covalently cross-linked (Glycyl lysine isopeptide (Lys-Gly) (interchain with G-Cter in ubiquitin)). T24 bears the Phosphothreonine mark. S383 carries the post-translational modification Phosphoserine. Residues 418-444 form a disordered region; the sequence is QRFLKASQDARQKAKEEKERVAKEEEE. Positions 425–444 are enriched in basic and acidic residues; the sequence is QDARQKAKEEKERVAKEEEE.

Belongs to the actin family. As to quaternary structure, component of the chromatin-remodeling INO80 complex, at least composed of ARP4, ARP5, ARP8, RVB1, RVB2, TAF14, NHP10, IES1, IES3, IES4, IES6, ACT1, IES2, IES5 and INO80.

Its subcellular location is the nucleus. Functionally, probably involved in transcription regulation via its interaction with the INO80 complex, a chromatin remodeling complex. The polypeptide is Actin-related protein 5 (ARP5) (Saccharomyces cerevisiae (strain ATCC 204508 / S288c) (Baker's yeast)).